A 470-amino-acid chain; its full sequence is 3-isopropylmalate dehydratase large subunit (470 aa).

Residues Cys-349, Cys-409, and Cys-412 each coordinate [4Fe-4S] cluster.

It belongs to the aconitase/IPM isomerase family. LeuC type 1 subfamily. As to quaternary structure, heterodimer of LeuC and LeuD. [4Fe-4S] cluster serves as cofactor.

The catalysed reaction is (2R,3S)-3-isopropylmalate = (2S)-2-isopropylmalate. It functions in the pathway amino-acid biosynthesis; L-leucine biosynthesis; L-leucine from 3-methyl-2-oxobutanoate: step 2/4. Functionally, catalyzes the isomerization between 2-isopropylmalate and 3-isopropylmalate, via the formation of 2-isopropylmaleate. The chain is 3-isopropylmalate dehydratase large subunit from Afipia carboxidovorans (strain ATCC 49405 / DSM 1227 / KCTC 32145 / OM5) (Oligotropha carboxidovorans).